A 765-amino-acid chain; its full sequence is LPS-assembly protein LptD (765 aa).

The signal sequence occupies residues 1–18 (MQIRYFLALSLLPQVVLA).

The protein belongs to the LptD family. As to quaternary structure, component of the lipopolysaccharide transport and assembly complex. Interacts with LptE and LptA.

It is found in the cell outer membrane. Its function is as follows. Together with LptE, is involved in the assembly of lipopolysaccharide (LPS) at the surface of the outer membrane. This chain is LPS-assembly protein LptD, found in Shewanella sp. (strain ANA-3).